The following is a 121-amino-acid chain: ATP synthase epsilon chain (121 aa).

Belongs to the ATPase epsilon chain family. As to quaternary structure, F-type ATPases have 2 components, CF(1) - the catalytic core - and CF(0) - the membrane proton channel. CF(1) has five subunits: alpha(3), beta(3), gamma(1), delta(1), epsilon(1). CF(0) has three main subunits: a, b and c.

The protein localises to the cell membrane. In terms of biological role, produces ATP from ADP in the presence of a proton gradient across the membrane. This chain is ATP synthase epsilon chain, found in Mycobacterium leprae (strain Br4923).